Reading from the N-terminus, the 256-residue chain is Probable elongation factor 1-delta (256 aa).

Phosphoserine is present on residues Ser-37, Ser-53, and Ser-89. Residues 110-146 (NGVSKEPEVEAKKPEANDDDDDVDLFGSDSEEEDGEA) form a disordered region. The segment covering 114 to 125 (KEPEVEAKKPEA) has biased composition (basic and acidic residues). Positions 126 to 144 (NDDDDDVDLFGSDSEEEDG) are enriched in acidic residues. Ser-137 and Ser-139 each carry phosphoserine.

The protein belongs to the EF-1-beta/EF-1-delta family. As to quaternary structure, EF-1 is composed of 4 subunits: alpha, beta, delta, and gamma.

EF-1-beta and EF-1-delta stimulate the exchange of GDP bound to EF-1-alpha to GTP. This Drosophila melanogaster (Fruit fly) protein is Probable elongation factor 1-delta (eEF1delta).